The sequence spans 362 residues: 3-isopropylmalate dehydrogenase (362 aa).

Residue glycine 77 to glutamate 88 coordinates NAD(+). Residues arginine 95, arginine 105, arginine 134, and aspartate 223 each contribute to the substrate site. Aspartate 223, aspartate 248, and aspartate 252 together coordinate Mg(2+). Glycine 287–asparagine 298 is an NAD(+) binding site.

The protein belongs to the isocitrate and isopropylmalate dehydrogenases family. Homodimer. It depends on Mg(2+) as a cofactor. The cofactor is Mn(2+).

The protein resides in the cytoplasm. The catalysed reaction is (2R,3S)-3-isopropylmalate + NAD(+) = 4-methyl-2-oxopentanoate + CO2 + NADH. It functions in the pathway amino-acid biosynthesis; L-leucine biosynthesis; L-leucine from 3-methyl-2-oxobutanoate: step 3/4. In terms of biological role, catalyzes the oxidation of 3-carboxy-2-hydroxy-4-methylpentanoate (3-isopropylmalate) to 3-carboxy-4-methyl-2-oxopentanoate. The product decarboxylates to 4-methyl-2 oxopentanoate. The sequence is that of 3-isopropylmalate dehydrogenase (LEU2) from Zygosaccharomyces rouxii (strain ATCC 2623 / CBS 732 / NBRC 1130 / NCYC 568 / NRRL Y-229).